We begin with the raw amino-acid sequence, 133 residues long: Large ribosomal subunit protein uL22 (133 aa).

The protein belongs to the universal ribosomal protein uL22 family. As to quaternary structure, part of the 50S ribosomal subunit.

Its function is as follows. This protein binds specifically to 23S rRNA; its binding is stimulated by other ribosomal proteins, e.g. L4, L17, and L20. It is important during the early stages of 50S assembly. It makes multiple contacts with different domains of the 23S rRNA in the assembled 50S subunit and ribosome. The globular domain of the protein is located near the polypeptide exit tunnel on the outside of the subunit, while an extended beta-hairpin is found that lines the wall of the exit tunnel in the center of the 70S ribosome. This chain is Large ribosomal subunit protein uL22, found in Aquifex aeolicus (strain VF5).